A 313-amino-acid chain; its full sequence is Porphobilinogen deaminase (313 aa).

S-(dipyrrolylmethanemethyl)cysteine is present on cysteine 242.

The protein belongs to the HMBS family. Monomer. It depends on dipyrromethane as a cofactor.

The enzyme catalyses 4 porphobilinogen + H2O = hydroxymethylbilane + 4 NH4(+). It participates in porphyrin-containing compound metabolism; protoporphyrin-IX biosynthesis; coproporphyrinogen-III from 5-aminolevulinate: step 2/4. Tetrapolymerization of the monopyrrole PBG into the hydroxymethylbilane pre-uroporphyrinogen in several discrete steps. The chain is Porphobilinogen deaminase from Pectobacterium carotovorum subsp. carotovorum (strain PC1).